The primary structure comprises 68 residues: uncharacterized protein (68 aa).

Residues 1 to 27 (MNEFEKWIEGRYEPHEQKQKEHEDTMG) form a disordered region.

This is an uncharacterized protein from Bacillus subtilis (strain 168).